The sequence spans 295 residues: Small ribosomal subunit protein uS2 (295 aa).

The disordered stretch occupies residues 263-295 (KKFSKTKNIDEETNTEFEKALNDADENKNSDNA). Basic and acidic residues predominate over residues 278–295 (EFEKALNDADENKNSDNA).

It belongs to the universal ribosomal protein uS2 family.

The polypeptide is Small ribosomal subunit protein uS2 (Rickettsia peacockii (strain Rustic)).